The chain runs to 119 residues: Nascent polypeptide-associated complex protein (119 aa).

In terms of domain architecture, NAC-A/B spans 5-73; sequence RMNSREMRRL…MREVPKEPEE (69 aa).

Belongs to the NAC-alpha family. Homodimer. Interacts with the ribosome. Binds ribosomal RNA.

Functionally, contacts the emerging nascent chain on the ribosome. The sequence is that of Nascent polypeptide-associated complex protein from Thermoplasma acidophilum (strain ATCC 25905 / DSM 1728 / JCM 9062 / NBRC 15155 / AMRC-C165).